The primary structure comprises 329 residues: Serine dehydratase-like (329 aa).

N-acetylmethionine is present on Met-1. At Lys-48 the chain carries N6-(pyridoxal phosphate)lysine.

It belongs to the serine/threonine dehydratase family. In terms of assembly, monomer. Homodimer. Pyridoxal 5'-phosphate is required as a cofactor.

It catalyses the reaction L-serine = pyruvate + NH4(+). The catalysed reaction is L-threonine = 2-oxobutanoate + NH4(+). The enzyme catalyses L-glutamate = D-glutamate. Its activity is regulated as follows. Serine dehydratase activity is inhibited by manganese chloride, ferrous chloride, cobalt chloride, cupric chloride, nickel chloride and zinc chloride. Glutamate racemase activity is inhibited by manganese chloride, ferrous chloride, cupric chloride and zinc chloride. Catalyzes the pyridoxal-phosphate-dependent dehydrative deamination of L-threonine and L-serine to ammonia and alpha-ketobutyrate and pyruvate, respectively. Also exhibits racemase activity towards L-glutamate and D-glutamate. In Rattus norvegicus (Rat), this protein is Serine dehydratase-like (Sdsl).